Consider the following 136-residue polypeptide: Large ribosomal subunit protein uL16c (136 aa).

Residues 1 to 20 (MLSPKRTRFRKQHRGRMKGK) are disordered.

The protein belongs to the universal ribosomal protein uL16 family. In terms of assembly, part of the 50S ribosomal subunit.

The protein localises to the plastid. The protein resides in the chloroplast. The chain is Large ribosomal subunit protein uL16c from Lolium perenne (Perennial ryegrass).